A 263-amino-acid polypeptide reads, in one-letter code: tRNA uridine(34) hydroxylase (263 aa).

One can recognise a Rhodanese domain in the interval E129–Y223. C183 acts as the Cysteine persulfide intermediate in catalysis.

Belongs to the TrhO family.

It catalyses the reaction uridine(34) in tRNA + AH2 + O2 = 5-hydroxyuridine(34) in tRNA + A + H2O. Its function is as follows. Catalyzes oxygen-dependent 5-hydroxyuridine (ho5U) modification at position 34 in tRNAs. This Delftia acidovorans (strain DSM 14801 / SPH-1) protein is tRNA uridine(34) hydroxylase.